We begin with the raw amino-acid sequence, 87 residues long: UPF0250 protein SG0794 (87 aa).

Belongs to the UPF0250 family.

This chain is UPF0250 protein SG0794, found in Sodalis glossinidius (strain morsitans).